The following is a 115-amino-acid chain: Large ribosomal subunit protein bL19 (115 aa).

Belongs to the bacterial ribosomal protein bL19 family.

In terms of biological role, this protein is located at the 30S-50S ribosomal subunit interface and may play a role in the structure and function of the aminoacyl-tRNA binding site. This is Large ribosomal subunit protein bL19 from Nitrosococcus oceani (strain ATCC 19707 / BCRC 17464 / JCM 30415 / NCIMB 11848 / C-107).